Reading from the N-terminus, the 367-residue chain is ABI gene family member 3 (367 aa).

A coiled-coil region spans residues 36-64 (CEDNYLQATDKRKALEETMAFTTQALASV). Residues 163–273 (LSRTGTLSRK…LEVSQPPLEA (111 aa)) form a disordered region. Over residues 206-225 (SAASSASSLASAGSAEGASG) the composition is skewed to low complexity. 2 positions are modified to phosphoserine: Ser216 and Ser219. The segment covering 236-264 (ATPPPPPVAPVTPPPPPLSAEVFLPPPPL) has biased composition (pro residues). The SH3 domain occupies 309–367 (SYLEKVVTLYPYTRQKDNELSFSEGTVICVTRRYSDGWCEGVSSEGTGFFPGNYVEPSC). Ser343 carries the phosphoserine modification.

The protein belongs to the ABI family. As to quaternary structure, may interact with PAK1 and PAK2. Probably interacts with TARSH.

The protein localises to the cytoplasm. Functionally, inhibits ectopic tumor cell metastasis of SRD cells. In vitro, reduces cell motility. The protein is ABI gene family member 3 (Abi3) of Mus musculus (Mouse).